We begin with the raw amino-acid sequence, 131 residues long: Translation initiation factor 5A (131 aa).

Hypusine is present on lysine 37.

Belongs to the eIF-5A family.

It is found in the cytoplasm. Functionally, functions by promoting the formation of the first peptide bond. This is Translation initiation factor 5A (eIF5A) from Methanococcus maripaludis (strain C6 / ATCC BAA-1332).